The following is a 249-amino-acid chain: Acetylglutamate kinase (249 aa).

Substrate contacts are provided by residues 38-39 (GG), Arg-60, and Asn-147.

This sequence belongs to the acetylglutamate kinase family. ArgB subfamily.

Its subcellular location is the cytoplasm. The catalysed reaction is N-acetyl-L-glutamate + ATP = N-acetyl-L-glutamyl 5-phosphate + ADP. It participates in amino-acid biosynthesis; L-arginine biosynthesis; N(2)-acetyl-L-ornithine from L-glutamate: step 2/4. Functionally, catalyzes the ATP-dependent phosphorylation of N-acetyl-L-glutamate. In Deinococcus radiodurans (strain ATCC 13939 / DSM 20539 / JCM 16871 / CCUG 27074 / LMG 4051 / NBRC 15346 / NCIMB 9279 / VKM B-1422 / R1), this protein is Acetylglutamate kinase.